We begin with the raw amino-acid sequence, 77 residues long: Large ribosomal subunit protein uL24 (77 aa).

Positions K42 to G61 are disordered.

Belongs to the universal ribosomal protein uL24 family. In terms of assembly, part of the 50S ribosomal subunit.

Its function is as follows. One of two assembly initiator proteins, it binds directly to the 5'-end of the 23S rRNA, where it nucleates assembly of the 50S subunit. One of the proteins that surrounds the polypeptide exit tunnel on the outside of the subunit. This chain is Large ribosomal subunit protein uL24, found in Lactobacillus acidophilus (strain ATCC 700396 / NCK56 / N2 / NCFM).